A 542-amino-acid chain; its full sequence is MYIQLLCFFLFLFLLLQATMSKRSFKKFVEQELGSLPHFLIYTVLEWSLIVFLFIDGVIAFLSNQFAKFFDLNIPCLLCTRIDHILVPRDPQFYYNESICDSHKKKVSSLAYCHVHKKLSEIKHMCEGCLLSFATEKDSDCDTYKSLIGILHKDLELLIDDERDLPLAFKKDDNLVQTTKNLVDYKTNNIKNDSLKQHCSCCGELLKIKSEKLPKNNNSFLAPAPSPRVSHNKLSENESEFKDMDVDRTPSFVRGGNKFFGIPLSDSAQNSPRWSVRSLKKSVLNKTENASDTTDPTGESILNQLKKEVRLDKKSLIDLYMELDEERSASAVAANEAMAMITRLQAEKAAVQMEALQYQRMMDEQAEYDQEALQSMSSELAKREEEMKELEAEFEVYREKYGCLTDQEDAREEFHKQNGNASAYDDCQETKPVSDLAVSSSNQQENGENIDQNGQSKRSEESTAENVVSADEEKGSESKEGIVKELSEITERLSTLQSNGDLLKHIADVLDVSEGEAILLQISQNLHMLRSFVAMPSESMNL.

An N-terminal signal peptide occupies residues 1–21 (MYIQLLCFFLFLFLLLQATMS). The helical transmembrane segment at 39-59 (FLIYTVLEWSLIVFLFIDGVI) threads the bilayer. Residues 219–239 (SFLAPAPSPRVSHNKLSENES) are disordered. The GTD-binding domain maps to 300–398 (SILNQLKKEV…ELEAEFEVYR (99 aa)). Residues 419–480 (GNASAYDDCQ…DEEKGSESKE (62 aa)) are disordered. Residues 437-456 (AVSSSNQQENGENIDQNGQS) show a composition bias toward polar residues. Basic and acidic residues predominate over residues 471-480 (DEEKGSESKE).

The protein resides in the membrane. In terms of biological role, probable membrane-anchored myosin receptors. In Arabidopsis thaliana (Mouse-ear cress), this protein is Probable myosin-binding protein 6.